Here is a 460-residue protein sequence, read N- to C-terminus: Bifunctional protein GlmU (460 aa).

The segment at 1 to 229 is pyrophosphorylase; that stretch reads MSNYAIILAA…FEESLGVNDR (229 aa). UDP-N-acetyl-alpha-D-glucosamine-binding positions include 8–11, Lys-22, Gln-72, and 77–78; these read LAAG and GT. Asp-102 contacts Mg(2+). 4 residues coordinate UDP-N-acetyl-alpha-D-glucosamine: Gly-139, Glu-154, Asn-169, and Asn-227. Asn-227 is a Mg(2+) binding site. A linker region spans residues 230–250; it reads VALATAEDVMRRRINKTHMIN. The interval 251 to 460 is N-acetyltransferase; sequence GVTFQNPNAT…KKPHHPSQQK (210 aa). 2 residues coordinate UDP-N-acetyl-alpha-D-glucosamine: Arg-332 and Lys-350. His-362 serves as the catalytic Proton acceptor. Positions 365 and 376 each coordinate UDP-N-acetyl-alpha-D-glucosamine. Acetyl-CoA-binding positions include Ala-379, 385–386, Ser-404, Ala-422, and Arg-439; that span reads NY.

It in the N-terminal section; belongs to the N-acetylglucosamine-1-phosphate uridyltransferase family. This sequence in the C-terminal section; belongs to the transferase hexapeptide repeat family. As to quaternary structure, homotrimer. It depends on Mg(2+) as a cofactor.

Its subcellular location is the cytoplasm. The enzyme catalyses alpha-D-glucosamine 1-phosphate + acetyl-CoA = N-acetyl-alpha-D-glucosamine 1-phosphate + CoA + H(+). It carries out the reaction N-acetyl-alpha-D-glucosamine 1-phosphate + UTP + H(+) = UDP-N-acetyl-alpha-D-glucosamine + diphosphate. Its pathway is nucleotide-sugar biosynthesis; UDP-N-acetyl-alpha-D-glucosamine biosynthesis; N-acetyl-alpha-D-glucosamine 1-phosphate from alpha-D-glucosamine 6-phosphate (route II): step 2/2. The protein operates within nucleotide-sugar biosynthesis; UDP-N-acetyl-alpha-D-glucosamine biosynthesis; UDP-N-acetyl-alpha-D-glucosamine from N-acetyl-alpha-D-glucosamine 1-phosphate: step 1/1. It functions in the pathway bacterial outer membrane biogenesis; LPS lipid A biosynthesis. Its function is as follows. Catalyzes the last two sequential reactions in the de novo biosynthetic pathway for UDP-N-acetylglucosamine (UDP-GlcNAc). The C-terminal domain catalyzes the transfer of acetyl group from acetyl coenzyme A to glucosamine-1-phosphate (GlcN-1-P) to produce N-acetylglucosamine-1-phosphate (GlcNAc-1-P), which is converted into UDP-GlcNAc by the transfer of uridine 5-monophosphate (from uridine 5-triphosphate), a reaction catalyzed by the N-terminal domain. The polypeptide is Bifunctional protein GlmU (Streptococcus thermophilus (strain ATCC BAA-491 / LMD-9)).